A 167-amino-acid polypeptide reads, in one-letter code: Anaerobic nitrite reductase NSHB4 (167 aa).

In terms of domain architecture, Globin spans 12–162; it reads RFTEEQEALV…LVAAIKEGMK (151 aa). Positions 45-49 match the Homodimerization motif; it reads EVAPS. Heme b contacts are provided by serine 55, histidine 73, arginine 103, threonine 107, and histidine 108. Residues 115–127 carry the Homodimerization motif; it reads DTHFEVARFALLE.

This sequence belongs to the plant globin family. In terms of assembly, homodimer. Heme b is required as a cofactor.

Its subcellular location is the cytoplasm. It localises to the nucleus. It carries out the reaction Fe(III)-heme b-[protein] + nitric oxide + H2O = Fe(II)-heme b-[protein] + nitrite + 2 H(+). In terms of biological role, phytoglobin that reduces nitrite to nitric oxide under anoxic conditions (e.g. during flooding or in waterlogged soil). May not function as an oxygen storage or transport protein. Has an unusually high affinity for O(2) through an hexacoordinate heme iron because of a very low dissociation constant. This chain is Anaerobic nitrite reductase NSHB4, found in Oryza sativa subsp. indica (Rice).